A 52-amino-acid polypeptide reads, in one-letter code: GIFSSRKCKTPSKTFKGICTRDSNCDTSCRYEGYPAGDCKGIRRRCMCSKPC.

4 disulfide bridges follow: Cys8/Cys52, Cys19/Cys39, Cys25/Cys46, and Cys29/Cys48.

As to expression, distributed in the epidermal cell layer of leaves and in the subepidermal layer region of stems. Not in roots.

It localises to the secreted. It is found in the cell wall. Its function is as follows. Antimicrobial peptide. Active against Fusarium spp., Gram-positive and Gram-negative bacterial pathogens. This is Defensin D2 from Spinacia oleracea (Spinach).